A 495-amino-acid chain; its full sequence is Glycerol kinase (495 aa).

Position 13 (T13) interacts with ADP. Residues T13, T14, and S15 each contribute to the ATP site. Residue T13 participates in sn-glycerol 3-phosphate binding. Position 17 (R17) interacts with ADP. Sn-glycerol 3-phosphate contacts are provided by R83, E84, Y135, and D244. R83, E84, Y135, D244, and Q245 together coordinate glycerol. ADP-binding residues include T266 and G309. ATP is bound by residues T266, G309, Q313, and G410. 2 residues coordinate ADP: G410 and N414.

It belongs to the FGGY kinase family.

The enzyme catalyses glycerol + ATP = sn-glycerol 3-phosphate + ADP + H(+). It functions in the pathway polyol metabolism; glycerol degradation via glycerol kinase pathway; sn-glycerol 3-phosphate from glycerol: step 1/1. With respect to regulation, inhibited by fructose 1,6-bisphosphate (FBP). Its function is as follows. Key enzyme in the regulation of glycerol uptake and metabolism. Catalyzes the phosphorylation of glycerol to yield sn-glycerol 3-phosphate. This is Glycerol kinase from Shewanella woodyi (strain ATCC 51908 / MS32).